The following is a 358-amino-acid chain: Methionine aminopeptidase 2 (358 aa).

Substrate is bound at residue histidine 111. The a divalent metal cation site is built by aspartate 131, aspartate 142, and histidine 211. Position 219 (histidine 219) interacts with substrate. A divalent metal cation contacts are provided by glutamate 244 and glutamate 339.

Belongs to the peptidase M24A family. Methionine aminopeptidase eukaryotic type 2 subfamily. Co(2+) serves as cofactor. Zn(2+) is required as a cofactor. It depends on Mn(2+) as a cofactor. Requires Fe(2+) as cofactor.

It localises to the cytoplasm. The catalysed reaction is Release of N-terminal amino acids, preferentially methionine, from peptides and arylamides.. Functionally, cotranslationally removes the N-terminal methionine from nascent proteins. The N-terminal methionine is often cleaved when the second residue in the primary sequence is small and uncharged (Met-Ala-, Cys, Gly, Pro, Ser, Thr, or Val). This is Methionine aminopeptidase 2 from Laccaria bicolor (strain S238N-H82 / ATCC MYA-4686) (Bicoloured deceiver).